The sequence spans 643 residues: RNA-binding protein RO60 (643 aa).

A TROVE domain is found at 63-473; it reads VENNAGGFVF…AFVNAPPTGK (411 aa). Residues 186–390 are RNA-binding; that stretch reads RTPTHLFEFV…SMPMTAMIRN (205 aa). The interval 465-643 is VWFA-like domain; sequence FVNAPPTGKR…IVHEFVTGKI (179 aa). The a divalent metal cation site is built by S482, S484, and T549.

It belongs to the Ro 60 kDa family.

Its subcellular location is the cytoplasm. Functionally, RNA-binding protein that binds to misfolded non-coding RNAs, pre-5S rRNA, and several small cytoplasmic RNA molecules known as Y RNAs. The protein is RNA-binding protein RO60 of Caenorhabditis elegans.